The chain runs to 248 residues: Regulator of G-protein signaling 7-binding protein A (248 aa).

The disordered stretch occupies residues methionine 1–arginine 32. 2 S-palmitoyl cysteine lipidation sites follow: cysteine 243 and cysteine 244.

The protein belongs to the RGS7BP/RGS9BP family. Palmitoylated. Undergoes rapid palmitoylation turnover. Palmitoylation regulates the cell membrane and nuclear shuttling and the regulation of GPCR signaling. Upon depalmitoylation, it is targeted from the plasma membrane into the nucleus. GPCR signaling inhibits depalmitoylation and promotes localization to the plasma membrane.

Its subcellular location is the nucleus. It is found in the cytoplasm. The protein localises to the cell membrane. Functionally, regulator of G protein-coupled receptor (GPCR) signaling. Regulatory subunit of the R7-Gbeta5 complexes that acts by controlling the subcellular location of the R7-Gbeta5 complexes. When palmitoylated, it targets the R7-Gbeta5 complexes to the plasma membrane, leading to inhibit G protein alpha subunits. When it is unpalmitoylated, the R7-Gbeta5 complexes undergo a nuclear/cytoplasmic shuttling. In Danio rerio (Zebrafish), this protein is Regulator of G-protein signaling 7-binding protein A (rgs7bpa).